A 101-amino-acid chain; its full sequence is MNKSMIILCAVLFLTYIIEENEALKVEDLPEPESYKRAKELAVKDAKGDKKAEGVAFQILKDNRKDCMTNCKLVPTCHLLSPECCPKQTPVCLQLDVVKSG.

An N-terminal signal peptide occupies residues 1 to 23; the sequence is MNKSMIILCAVLFLTYIIEENEA.

It belongs to the scoloptoxin-10 family. In terms of processing, contains 3 disulfide bonds. Expressed by the venom gland.

It localises to the secreted. The polypeptide is U-scoloptoxin(10)-Sm2a (Scolopendra morsitans (Tanzanian blue ringleg centipede)).